The chain runs to 254 residues: Ciliary microtubule associated protein 1A (254 aa).

2 STPGR repeats span residues 180-205 (PGPAAYRQTDVQVTKFKAPQYTMAAR) and 216-241 (PGPGAHSPEKVTMTRPCAPVVSFGIK). Positions 207–226 (EPPGDKTLKPGPGAHSPEKV) are disordered.

It belongs to the CIMAP family. As to quaternary structure, microtubule inner protein component of sperm flagellar doublet microtubules.

It is found in the cytoplasm. Its subcellular location is the cytoskeleton. The protein localises to the flagellum axoneme. In terms of biological role, outer dense fibers are filamentous structures located on the outside of the axoneme in the midpiece and principal piece of the mammalian sperm tail. May help to maintain the passive elastic structures and elastic recoil of the sperm tail. The sequence is that of Ciliary microtubule associated protein 1A (CIMAP1A) from Bos taurus (Bovine).